A 49-amino-acid chain; its full sequence is Large ribosomal subunit protein eL40 (49 aa).

It belongs to the eukaryotic ribosomal protein eL40 family.

This is Large ribosomal subunit protein eL40 from Methanococcoides burtonii (strain DSM 6242 / NBRC 107633 / OCM 468 / ACE-M).